Reading from the N-terminus, the 225-residue chain is Late gene expression regulator BDLF4 (225 aa).

Residues 1–20 (MSDQGRLSLPRGEGGTDEPN) are disordered.

It belongs to the herpesviridae UL92 family.

Its function is as follows. Part of the viral pre-initiation complex (vPIC) that is responsible for the expression of vPIC-dependent late genes. vPIC is composed of at least BcRF1 that binds the viral TATT box, BDLF3.5, BDLF4, BFRF2, BGLF3, BGLF4 and BVLF1. The polypeptide is Late gene expression regulator BDLF4 (Homo sapiens (Human)).